Consider the following 1605-residue polypeptide: Ribosome-binding protein 1 (1605 aa).

The Lumenal segment spans residues 1-7 (MDIYDTQ). Residues 8 to 28 (TLGVVVFGGFMVVSAIGIFLV) traverse the membrane as a helical segment. Over 29 to 1605 (STFSMKETSY…GSSSKEGTSV (1577 aa)) the chain is Cytoplasmic. A disordered region spans residues 44 to 88 (NQRKEMAKTHHQKGEKKKKEKTVEKKGKTKKKEEKPNGKIPEHDL). Over residues 52–63 (THHQKGEKKKKE) the composition is skewed to basic residues. Positions 64–88 (KTVEKKGKTKKKEEKPNGKIPEHDL) are enriched in basic and acidic residues. A Phosphoserine modification is found at Ser-111. The interval 114-150 (SSVGHTPIATVPAMPQEKLASSPKDRKKKEKKVAKVE) is disordered. Lys-148 participates in a covalent cross-link: Glycyl lysine isopeptide (Lys-Gly) (interchain with G-Cter in SUMO2). Phosphoserine is present on residues Ser-159 and Ser-165. Residues 172-849 (ATPKEVPMVA…PGPPDCDGPL (678 aa)) are disordered. Tandem repeats lie at residues 196–205 (SQGKKGQGAQ), 206–215 (NQAKKGEGAQ), 216–225 (NQGKKGEGAQ), 226–235 (NQAKKGEGAQ), 236–245 (NQAKKGEGAQ), 246–255 (NQGKKGEGAQ), 256–265 (NQAKKGEGGQ), 266–275 (NQAKKGEGAQ), 276–285 (NQGKKGEGAQ), 286–295 (NQGKKGEGAQ), 296–305 (NQAKKGEGAQ), 306–315 (NQAKKGEGAQ), 316–325 (NQGKKGEGAQ), 326–335 (NQSKKGEGAQ), 336–345 (NQAKKGEGGQ), 346–355 (NQAKKGEGAQ), 356–365 (NQAKKGEGAQ), 366–375 (NQAKKGEGVQ), 376–385 (NQAKKGVEGA), 386–395 (QNQGKKGEAN), 396–405 (QNQAKKGEGG), 406–415 (QNQTKKGEGP), 416–425 (QNQGKKGEAA), 426–435 (QKQDKKIEGA), 436–445 (QNQGKKPEGT), 446–455 (SNQGKKGEGA), 456–465 (QNQGKKGEGA), 466–475 (QNQSKKGEGA), 476–485 (QNQAKKGEGG), 486–495 (QNQAKKGEGA), 496–505 (QNQAKKGEGA), 506–515 (QNQAKKGEGV), 516–525 (QNQAKKGVEG), 527–536 (QNQGKKGEAN), 537–546 (QNQAKKGEGG), 547–556 (QNQTKKGEGP), 557–566 (QNQGKKGEAA), 567–576 (QKQDKKIEGA), 577–586 (QNQGKKPEGT), 587–596 (SNQGKKGEGA), 597–606 (QNQGKKGEGA), 607–616 (QNQGKKGEGA), 617–626 (QNQGKKGEGA), 628–637 (NQGKKGEGAQ), 638–647 (NQGKKGEGAQ), 648–657 (NQGKKGEGAQ), 658–667 (NQGKKGEGPQ), 668–677 (NQAKKGEGAQ), 678–687 (NQGKKGEGAQ), 688–697 (NQGKKGEGAQ), 698–707 (NQGKKAEGVQ), 708–717 (SQSKKGEGTQ), 718–727 (NQGKKGDGNP), 729–738 (QGKKGEGASN), 739–748 (QNRKTDTVAN), 749–758 (QGTKQEGVSN), 759–768 (QVKKSEGSPN), 769–778 (QGKKAEGAPN), 779–788 (QGKKKDGSPS), 789–798 (QAKKVDAAAN), and 799–808 (QGKKSEMAPA). Residues 196–808 (SQGKKGQGAQ…QGKKSEMAPA (613 aa)) are 61 X 10 AA tandem repeats of [NSQ]-[NKQVGA]-[GSAQKRT]-[ASGDTK]-[KGTQSAV]-[KGAED]-[EQVGIPTDMA]-[EGVAS]-[AGVPETNS]-[AQNGPTVS]. Low complexity predominate over residues 197 to 208 (QGKKGQGAQNQA). Composition is skewed to polar residues over residues 224–258 (AQNQ…QNQA), 274–338 (AQNQ…QNQA), 354–378 (AQNQ…QNQA), and 385–399 (AQNQ…QNQA). Residues 420–433 (KKGEAAQKQDKKIE) are compositionally biased toward basic and acidic residues. Polar residues-rich tracts occupy residues 435 to 479 (AQNQ…QNQA), 495 to 519 (AQNQ…QNQA), and 526 to 540 (AQNQ…QNQA). Over residues 561–574 (KKGEAAQKQDKKIE) the composition is skewed to basic and acidic residues. Polar residues-rich tracts occupy residues 576 to 720 (AQNQ…QNQG) and 736 to 769 (ASNQ…SPNQ). Ser-786 is subject to Phosphoserine. Residues 811-821 (QKASMVQSQEA) show a composition bias toward polar residues. At Ser-818 the chain carries Phosphoserine. A Glycyl lysine isopeptide (Lys-Gly) (interchain with G-Cter in SUMO1) cross-link involves residue Lys-823. Position 1135 is an N6-acetyllysine (Lys-1135). 2 positions are modified to phosphoserine: Ser-1162 and Ser-1178. 2 disordered regions span residues 1460–1481 (MRSH…AEQD) and 1571–1605 (TTQE…GTSV). The segment covering 1576 to 1598 (LTKEKDTVKKLQEQLGKAEDGSS) has biased composition (basic and acidic residues).

As to expression, widely expressed.

It localises to the endoplasmic reticulum membrane. In terms of biological role, acts as a ribosome receptor and mediates interaction between the ribosome and the endoplasmic reticulum membrane. The polypeptide is Ribosome-binding protein 1 (Rrbp1) (Mus musculus (Mouse)).